Here is a 212-residue protein sequence, read N- to C-terminus: Protein-L-isoaspartate O-methyltransferase (212 aa).

Residue S60 is part of the active site.

This sequence belongs to the methyltransferase superfamily. L-isoaspartyl/D-aspartyl protein methyltransferase family.

It is found in the cytoplasm. The catalysed reaction is [protein]-L-isoaspartate + S-adenosyl-L-methionine = [protein]-L-isoaspartate alpha-methyl ester + S-adenosyl-L-homocysteine. In terms of biological role, catalyzes the methyl esterification of L-isoaspartyl residues in peptides and proteins that result from spontaneous decomposition of normal L-aspartyl and L-asparaginyl residues. It plays a role in the repair and/or degradation of damaged proteins. The sequence is that of Protein-L-isoaspartate O-methyltransferase from Methanococcus maripaludis (strain C7 / ATCC BAA-1331).